A 203-amino-acid polypeptide reads, in one-letter code: MKTLVLLSSILGDRSKSKALADHFLARMCEHEPASDITVRDLAAQPVPYFDAETAGALFTPADARSDAQRAIVALSDALIAELQAAERVVFAVPTYNFNLPAQLKSYLDYVARAGITFRYTPEGVPEGLLQGKQVYVLIARGGKALGTPQDSMTPYLKQMLGFLGMQDVTVIAAEGMAMGEFAAAEGLAQAKARIDELLPQLA.

Residues Ser9 and 15 to 17 (SKS) contribute to the FMN site.

Belongs to the azoreductase type 1 family. In terms of assembly, homodimer. It depends on FMN as a cofactor.

It catalyses the reaction 2 a quinone + NADH + H(+) = 2 a 1,4-benzosemiquinone + NAD(+). The enzyme catalyses N,N-dimethyl-1,4-phenylenediamine + anthranilate + 2 NAD(+) = 2-(4-dimethylaminophenyl)diazenylbenzoate + 2 NADH + 2 H(+). Quinone reductase that provides resistance to thiol-specific stress caused by electrophilic quinones. In terms of biological role, also exhibits azoreductase activity. Catalyzes the reductive cleavage of the azo bond in aromatic azo compounds to the corresponding amines. The sequence is that of FMN-dependent NADH:quinone oxidoreductase from Bordetella avium (strain 197N).